Consider the following 169-residue polypeptide: UPF0065 protein in clcB-clcD intergenic region (169 aa).

The protein belongs to the UPF0065 (bug) family.

The protein resides in the periplasm. This chain is UPF0065 protein in clcB-clcD intergenic region, found in Pseudomonas knackmussii (strain DSM 6978 / CCUG 54928 / LMG 23759 / B13).